The following is a 208-amino-acid chain: NAD(P)H-hydrate epimerase (208 aa).

Positions 11–208 constitute a YjeF N-terminal domain; it reads MRAKDQFTIN…VIVADDMGTY (198 aa). Residue 59–63 coordinates (6S)-NADPHX; sequence NNGGD. K(+) is bound by residues Asn-60 and Asp-122. Residues 126–132, Tyr-137, and Asp-155 contribute to the (6S)-NADPHX site; that span reads GIGIDRP. A K(+)-binding site is contributed by Ser-158.

The protein belongs to the NnrE/AIBP family. K(+) serves as cofactor.

The enzyme catalyses (6R)-NADHX = (6S)-NADHX. It catalyses the reaction (6R)-NADPHX = (6S)-NADPHX. Catalyzes the epimerization of the S- and R-forms of NAD(P)HX, a damaged form of NAD(P)H that is a result of enzymatic or heat-dependent hydration. This is a prerequisite for the S-specific NAD(P)H-hydrate dehydratase to allow the repair of both epimers of NAD(P)HX. The sequence is that of NAD(P)H-hydrate epimerase from Limosilactobacillus fermentum (strain NBRC 3956 / LMG 18251) (Lactobacillus fermentum).